Reading from the N-terminus, the 109-residue chain is Mitochondrial pyruvate carrier 1 (109 aa).

N-acetylalanine is present on Ala-2. At 2–20 (AGALVRKAADYVRSKDFRD) the chain is on the mitochondrial matrix side. Residues 21–41 (YLMSTHFWGPVANWGLPIAAI) traverse the membrane as a helical segment. Over 42–52 (NDMKKSPEIIS) the chain is Mother cell cytoplasmic. Residues 53-71 (GRMTFALCCYSLTFMRFAY) traverse the membrane as a helical segment. Lys-72 bears the N6-acetyllysine mark. The Mitochondrial matrix segment spans residues 72 to 109 (KVQPRNWLLFACHATNEVAQLIQGGRLIRHEMSKKASA).

In terms of assembly, homodimer. Forms heterodimer with MPC2. The heterodimer is the more stable and dominant form.

The protein resides in the mitochondrion inner membrane. The enzyme catalyses pyruvate(out) + H(+)(out) = pyruvate(in) + H(+)(in). In terms of biological role, mediates the uptake of pyruvate into mitochondria. This chain is Mitochondrial pyruvate carrier 1 (MPC1), found in Bos taurus (Bovine).